A 302-amino-acid polypeptide reads, in one-letter code: Tetrahydromethanopterin S-methyltransferase subunit E (302 aa).

The next 6 membrane-spanning stretches (helical) occupy residues 3–23 (PLIS…AGAS), 86–106 (PLFA…TFAV), 132–152 (ITPI…VSYL), 155–175 (VVLG…ITIG), 233–253 (PVTG…TTIF), and 259–279 (LGWL…IWNW).

It belongs to the MtrE family. In terms of assembly, the complex is composed of 8 subunits; MtrA, MtrB, MtrC, MtrD, MtrE, MtrF, MtrG and MtrH.

It localises to the cell membrane. It catalyses the reaction 5-methyl-5,6,7,8-tetrahydromethanopterin + coenzyme M + 2 Na(+)(in) = 5,6,7,8-tetrahydromethanopterin + methyl-coenzyme M + 2 Na(+)(out). The protein operates within one-carbon metabolism; methanogenesis from CO(2); methyl-coenzyme M from 5,10-methylene-5,6,7,8-tetrahydromethanopterin: step 2/2. Functionally, part of a complex that catalyzes the formation of methyl-coenzyme M and tetrahydromethanopterin from coenzyme M and methyl-tetrahydromethanopterin. This is an energy-conserving, sodium-ion translocating step. The protein is Tetrahydromethanopterin S-methyltransferase subunit E of Methanosarcina barkeri (strain Fusaro / DSM 804).